Consider the following 1199-residue polypeptide: Chromatin structure-remodeling complex subunit snf21 (1199 aa).

An HSA domain is found at 256–328; that stretch reads QRSDRERRLK…AKQRLQALKE (73 aa). In terms of domain architecture, Helicase ATP-binding spans 429-594; it reads ISLYNNHLNG…WALLNFVLPR (166 aa). Residue 442 to 449 participates in ATP binding; that stretch reads DEMGLGKT. Residues 544 to 547 carry the DEGH box motif; it reads DEGH. Residues 740 to 903 enclose the Helicase C-terminal domain; the sequence is LLDRILPKLF…STPEEREAFL (164 aa). A disordered region spans residues 1017–1059; it reads MESEARPTRGRPKRNIASVDETPALTLNGKPKKKRGPAPDTLT. The Bromo domain maps to 1061–1171; that stretch reads EHRSLLRRVC…TAMETKIEEL (111 aa).

It belongs to the SNF2/RAD54 helicase family. As to quaternary structure, component of the RSC complex composed of at least arp9, arp42, rsc1, rsc4, rsc7, rsc9, rsc58, sfh1, snf21, ssr1, ssr2, ssr3 and ssr4. The complex interacts with histone and histone variant components of centromeric chromatin.

Its subcellular location is the nucleus. In terms of biological role, helicase. Component of the chromatin structure remodeling complex (RSC), which is involved in transcription regulation and nucleosome positioning. Controls particularly membrane and organelle development genes. In Schizosaccharomyces pombe (strain 972 / ATCC 24843) (Fission yeast), this protein is Chromatin structure-remodeling complex subunit snf21 (snf21).